We begin with the raw amino-acid sequence, 70 residues long: Small ribosomal subunit protein bS21 (70 aa).

Belongs to the bacterial ribosomal protein bS21 family.

The polypeptide is Small ribosomal subunit protein bS21 (rpsU) (Helicobacter pylori (strain J99 / ATCC 700824) (Campylobacter pylori J99)).